A 235-amino-acid chain; its full sequence is Transmembrane emp24 domain-containing protein 9 (235 aa).

An N-terminal signal peptide occupies residues 1 to 37; sequence MAAERSLWVVGLCPGSRLGRVVRVLLLLLWFAARGGA. The Lumenal segment spans residues 38–201; it reads LYFHIGETEK…FRQTSESTNQ (164 aa). A GOLD domain is found at 47–145; it reads KKCFIEEIPD…MLRVHLDIQV (99 aa). Residues 121–160 are required for interaction with STX17; sequence CLHSNSTKFSLFAGGMLRVHLDIQVGEHANDYAEIAAKDK. Asn-125 carries N-linked (GlcNAc...) asparagine glycosylation. Residues 154-184 are a coiled coil; sequence EIAAKDKLSELQLRVRQLVEQVEQIQKEQNY. Lys-160 carries the N6-acetyllysine modification. Residues 202–222 traverse the membrane as a helical segment; sequence RVLWWSILQTLILVAIGVWQM. Residues 223-235 lie on the Cytoplasmic side of the membrane; it reads RHLKSFFEAKKLV. The short motif at 228–229 is the COPII vesicle coat-binding element; it reads FF. A COPI vesicle coat-binding motif is present at residues 228–235; sequence FFEAKKLV.

This sequence belongs to the EMP24/GP25L family. Monomer and homodimer in endoplasmic reticulum. Predominantly monomeric and to lesser extent homodimeric in endoplasmic reticulum-Golgi intermediate compartment and cis-Golgi network. Probably oligomerizes with other members of the EMP24/GP25L family such as TMED2, TMED7 and TMED10. Interacts with TMED5. Interacts (via C-terminus) with COPG1; the interaction involves dimeric TMED9. Interacts with PTPN2 and SPAST. Interacts with STX17; the interaction is direct. In terms of processing, N-linked glycosylated containing high mannose.

The protein resides in the endoplasmic reticulum membrane. It is found in the golgi apparatus. It localises to the cis-Golgi network membrane. The protein localises to the endoplasmic reticulum-Golgi intermediate compartment membrane. Its subcellular location is the trans-Golgi network membrane. In terms of biological role, appears to be involved in vesicular protein trafficking, mainly in the early secretory pathway. In COPI vesicle-mediated retrograde transport involved in the coatomer recruitment to membranes of the early secretory pathway. Increases coatomer-dependent activity of ARFGAP2. Thought to play a crucial role in the specific retention of p24 complexes in cis-Golgi membranes; specifically contributes to the coupled localization of TMED2 and TMED10 in the cis-Golgi network. May be involved in organization of intracellular membranes, such as of the ER-Golgi intermediate compartment and the Golgi apparatus. Involved in ER localization of PTPN2. The sequence is that of Transmembrane emp24 domain-containing protein 9 (TMED9) from Bos taurus (Bovine).